The chain runs to 1375 residues: MAKNEVLSLPVDSLKLSQTALDRLKLSGISRLEDFNTFNLKELQMLLSDSFNEVLPTLIYYKLPRDVRDLSLSDEVVSVLETAGIKDLEALTKYDKSTLYHVFKDDEFLLKEINDLFELYHEEKLSTLNVATEVFEEVALPQEVSVEDRVNKIIQPIRKTYGSKAFTHFKVRLASPDEIRNWSYGEVINHETINYRTSKPEPGGLFDERIFGPTRDYQCACGKKQTVNKGQICPKCGIEITESKVRRERMGHINLEAPVVHTWYLKNSPSRLAILLGIKAKQLEEVVYHASYIVTDPGQNTPLAKKQILSEQDYSLLVEEYGSRFTALTGAEAVKKLLQDLDLDKEVKNLRKRLKTSSKQKRDRIIKRLDVVEAFNQSDNKPEWMVMDVIPVIPPDLRPMVPLDGGRFATTDLNDLYRRILNRNNRLKKQKEQMAPRLITKNEKRMLQEAVDALFDNAKRGKKAAVERNRHLKSLSDLLRGKQGRFRQNLLGKRVDYSGRSVIIVGPDLEMYQCGIPREMAITLFKPFILRELQLTHGAEKKNANAKYERRDDDTWRALEKVVREHPVLLNRAPTLHRLGIQAFEVKLIDGKAIRLHPLVTPAFNADFDGDQMAVHLPLSPEAQAEARLLMLASNNILNPRDGKPVVTPSQDMVLGNYYLTIEESKDRNFGDDLERTKKHQEKHRHEGKFFSSIDEVKIAYENKDISLHTRIIIKPESVKDTFTVEQKNMYLVTTLGKIIFNEILPETFPYVNEPTMSNLSEKTPDIYFIKKGVNPKDALKHIPTPEPFKKRFLSMVIAQVFKLFHISETSRMLDKLKDLGFKYSTVAGITISYADINVYSKKKEMVEATEEEINEIEEWFEDGLLTDSERRKLVIDKWTNVKNEIQSGIMKEFDKDNNIFMMSDSGARGNVSNFTQLVGMRGLMSNPKGETIEVPVQSSFREGLTVSEFFISTHGARKGSTDTALKTAESGYLTRRLVDVSQDVIIVEDDCGSSHGVYVEAIKDESGKEIVPLYDRIYGRFAAHDIISPKTGEVFVKRNELITEEIGLAIVKSGMQKVEIRSIMTCTSSHGICAKDYGINLATNQFVEVGEAIGVVAAQSIGEPGTQLTMRTFHTGGVAAGADITQGLPRIQELFEARNPKGKATISEVEGKVKDISRRGGSISITITDTQGTEYKYTLDPNIEALVKKGQDVVAGQKLSSGSINPKELLRVTDVKTASNYILEEVQKVYRAQGVEISDKHVEVIIRQMLRRIMVIIEGDTNILPGTEVSIDEFKRENKEVLKNRGRLAVGRPILLGITRASLRSDSFLSAASFQETTRILTDAAIRSKKDELHGLKENVIIGGLIPAGTGILQEKFFHYDQPEDKKPIYDDFE.

The tract at residues 1-158 (MAKNEVLSLP…RVNKIIQPIR (158 aa)) is unknown. The tract at residues 159-1353 (KTYGSKAFTH…GGLIPAGTGI (1195 aa)) is DNA-directed RNA polymerase subunit beta'. C219, C221, C233, and C236 together coordinate Zn(2+). 3 residues coordinate Mg(2+): D607, D609, and D611.

This sequence belongs to the RNA polymerase beta' chain family. The RNAP catalytic core consists of 2 alpha, 1 beta, 1 beta' and 1 omega subunit. When a sigma factor is associated with the core the holoenzyme is formed, which can initiate transcription. It depends on Mg(2+) as a cofactor. The cofactor is Zn(2+).

It catalyses the reaction RNA(n) + a ribonucleoside 5'-triphosphate = RNA(n+1) + diphosphate. Functionally, DNA-dependent RNA polymerase catalyzes the transcription of DNA into RNA using the four ribonucleoside triphosphates as substrates. The protein is DNA-directed RNA polymerase subunit beta' of Acholeplasma laidlawii (strain PG-8A).